The sequence spans 34 residues: Egg-releasing peptide (34 aa).

This chain is Egg-releasing peptide, found in Aplysia californica (California sea hare).